The chain runs to 1132 residues: Mediator of RNA polymerase II transcription subunit 5 (1132 aa).

A compositionally biased stretch (basic and acidic residues) spans 998–1023 (KGDVDIKGEDLHEKNDSAEVRQETQP). Residues 998–1070 (KGDVDIKGED…RTNNVPMIKA (73 aa)) are disordered. The span at 1047–1057 (YEEEEENEDND) shows a compositional bias: acidic residues.

It belongs to the Mediator complex subunit 5 family. In terms of assembly, component of the Mediator complex, which is composed of at least 21 subunits that form three structurally distinct submodules. The Mediator head module contains MED6, MED8, MED11, SRB4/MED17, SRB5/MED18, ROX3/MED19, SRB2/MED20 and SRB6/MED22, the middle module contains MED1, MED4, NUT1/MED5, MED7, CSE2/MED9, NUT2/MED10, SRB7/MED21 and SOH1/MED31, and the tail module contains MED2, PGD1/MED3, RGR1/MED14, GAL11/MED15 and SIN4/MED16. The head and the middle modules interact directly with RNA polymerase II, whereas the elongated tail module interacts with gene-specific regulatory proteins.

Its subcellular location is the nucleus. In terms of biological role, component of the Mediator complex, a coactivator involved in the regulated transcription of nearly all RNA polymerase II-dependent genes. Mediator functions as a bridge to convey information from gene-specific regulatory proteins to the basal RNA polymerase II transcription machinery. The Mediator complex, having a compact conformation in its free form, is recruited to promoters by direct interactions with regulatory proteins and serves for the assembly of a functional preinitiation complex with RNA polymerase II and the general transcription factors. The Mediator complex unfolds to an extended conformation and partially surrounds RNA polymerase II, specifically interacting with the unphosphorylated form of the C-terminal domain (CTD) of RNA polymerase II. The Mediator complex dissociates from the RNA polymerase II holoenzyme and stays at the promoter when transcriptional elongation begins. In Saccharomyces cerevisiae (strain ATCC 204508 / S288c) (Baker's yeast), this protein is Mediator of RNA polymerase II transcription subunit 5 (NUT1).